The following is a 299-amino-acid chain: Glycine--tRNA ligase alpha subunit (299 aa).

It belongs to the class-II aminoacyl-tRNA synthetase family. As to quaternary structure, tetramer of two alpha and two beta subunits.

Its subcellular location is the cytoplasm. The catalysed reaction is tRNA(Gly) + glycine + ATP = glycyl-tRNA(Gly) + AMP + diphosphate. The protein is Glycine--tRNA ligase alpha subunit of Pediococcus pentosaceus (strain ATCC 25745 / CCUG 21536 / LMG 10740 / 183-1w).